A 169-amino-acid chain; its full sequence is MTDTQNRVAMGYIKGVFGIKGWLKIAANTEYSDSLLDYPEWHLAKDGKTVSVTLEAGKVVNGELQVKFEGIDDRDSAFSLRGYTIEIPREAFAPTEEDEYYWADLVGMTVVNKDDTVLGKVSNLMETGANDVLMIDGEHGQILIPFVSQYIETVDTGSKTITADWGLDY.

A PRC barrel domain is found at 97–169 (EDEYYWADLV…TITADWGLDY (73 aa)).

Belongs to the RimM family. Binds ribosomal protein uS19.

Its subcellular location is the cytoplasm. An accessory protein needed during the final step in the assembly of 30S ribosomal subunit, possibly for assembly of the head region. Essential for efficient processing of 16S rRNA. May be needed both before and after RbfA during the maturation of 16S rRNA. It has affinity for free ribosomal 30S subunits but not for 70S ribosomes. The polypeptide is Ribosome maturation factor RimM (Neisseria gonorrhoeae (strain ATCC 700825 / FA 1090)).